A 154-amino-acid chain; its full sequence is MFGADKGTADKLDGKKLHIGIVQARFNENITNTLAAACRAELLRLGVQEKHIRHVLVPGALEVPVALQAMAERDEYDALIALGCIIRGETYHFELVANESGAGVTRLALDYQVPIANAIITTENLEQALARQTEKGVDAARVAVEMANLLEELS.

5-amino-6-(D-ribitylamino)uracil contacts are provided by residues Phe26, 60–62, and 84–86; these read ALE and CII. A (2S)-2-hydroxy-3-oxobutyl phosphate-binding site is contributed by 89–90; it reads ET. His92 serves as the catalytic Proton donor. Asn117 is a 5-amino-6-(D-ribitylamino)uracil binding site. Position 131 (Arg131) interacts with (2S)-2-hydroxy-3-oxobutyl phosphate.

It belongs to the DMRL synthase family.

It catalyses the reaction (2S)-2-hydroxy-3-oxobutyl phosphate + 5-amino-6-(D-ribitylamino)uracil = 6,7-dimethyl-8-(1-D-ribityl)lumazine + phosphate + 2 H2O + H(+). Its pathway is cofactor biosynthesis; riboflavin biosynthesis; riboflavin from 2-hydroxy-3-oxobutyl phosphate and 5-amino-6-(D-ribitylamino)uracil: step 1/2. Functionally, catalyzes the formation of 6,7-dimethyl-8-ribityllumazine by condensation of 5-amino-6-(D-ribitylamino)uracil with 3,4-dihydroxy-2-butanone 4-phosphate. This is the penultimate step in the biosynthesis of riboflavin. This chain is 6,7-dimethyl-8-ribityllumazine synthase, found in Acidovorax sp. (strain JS42).